The following is an 81-amino-acid chain: Photosystem I iron-sulfur center (81 aa).

2 consecutive 4Fe-4S ferredoxin-type domains span residues 2-31 and 39-68; these read SHAVKIYDTCIGCTQCVRACPLDVLEMVPW and IAASPRTEDCVGCKRCETACPTHFLSIRVY. 8 residues coordinate [4Fe-4S] cluster: cysteine 11, cysteine 14, cysteine 17, cysteine 21, cysteine 48, cysteine 51, cysteine 54, and cysteine 58.

As to quaternary structure, the cyanobacterial PSI reaction center is composed of one copy each of PsaA,B,C,D,E,F,I,J,K,L,M and X, and forms trimeric complexes. It depends on [4Fe-4S] cluster as a cofactor.

It is found in the cellular thylakoid membrane. It carries out the reaction reduced [plastocyanin] + hnu + oxidized [2Fe-2S]-[ferredoxin] = oxidized [plastocyanin] + reduced [2Fe-2S]-[ferredoxin]. Its function is as follows. Apoprotein for the two 4Fe-4S centers FA and FB of photosystem I (PSI); essential for photochemical activity. FB is the terminal electron acceptor of PSI, donating electrons to ferredoxin. The C-terminus interacts with PsaA/B/D and helps assemble the protein into the PSI complex. Required for binding of PsaD and PsaE to PSI. PSI is a plastocyanin/cytochrome c6-ferredoxin oxidoreductase, converting photonic excitation into a charge separation, which transfers an electron from the donor P700 chlorophyll pair to the spectroscopically characterized acceptors A0, A1, FX, FA and FB in turn. The polypeptide is Photosystem I iron-sulfur center (Prochlorococcus marinus (strain MIT 9313)).